The sequence spans 621 residues: uncharacterized protein (621 aa).

An N-terminal signal peptide occupies residues 1–15; sequence MRRSVCYVTPSVARA.

This sequence belongs to the chlamydial CPn_0512/CT_425/TC_0708 family.

This is an uncharacterized protein from Chlamydia trachomatis serovar D (strain ATCC VR-885 / DSM 19411 / UW-3/Cx).